Reading from the N-terminus, the 105-residue chain is MKQQKQKIRIRLKGFDQGQLDRSTADIVETAKRTGARVAGPIPLPTKREVYTVLRSPHVDKKSREQFEIRTHKRLIDILDPTGKTIDALKMLALPAGVDIKIKAA.

It belongs to the universal ribosomal protein uS10 family. As to quaternary structure, part of the 30S ribosomal subunit.

Functionally, involved in the binding of tRNA to the ribosomes. In Chlamydia abortus (strain DSM 27085 / S26/3) (Chlamydophila abortus), this protein is Small ribosomal subunit protein uS10.